An 88-amino-acid polypeptide reads, in one-letter code: UPF0250 protein Shew_2940 (88 aa).

Belongs to the UPF0250 family.

In Shewanella loihica (strain ATCC BAA-1088 / PV-4), this protein is UPF0250 protein Shew_2940.